Consider the following 300-residue polypeptide: Acetylglutamate kinase (300 aa).

Substrate-binding positions include 73 to 74, Arg95, and Asn197; that span reads GG.

Belongs to the acetylglutamate kinase family. ArgB subfamily.

The protein resides in the cytoplasm. The catalysed reaction is N-acetyl-L-glutamate + ATP = N-acetyl-L-glutamyl 5-phosphate + ADP. It functions in the pathway amino-acid biosynthesis; L-arginine biosynthesis; N(2)-acetyl-L-ornithine from L-glutamate: step 2/4. Its function is as follows. Catalyzes the ATP-dependent phosphorylation of N-acetyl-L-glutamate. The chain is Acetylglutamate kinase from Bordetella avium (strain 197N).